A 531-amino-acid chain; its full sequence is Polyamine aminopropyltransferase 1 (531 aa).

The next 7 helical transmembrane spans lie at 27–47, 59–79, 96–116, 122–142, 160–180, 188–208, and 218–238; these read FLLL…ELAL, VLQT…GSLA, GVLA…FAWL, AMIV…PLLM, MFAV…LFLL, GALV…VFIF, and AGLL…YVLA. The interval 205–476 is spermidine synthase; it reads VFIFRRQTGR…VLARPGTEAP (272 aa). The PABS domain occupies 233–471; it reads TTYVLADDLE…GNWGFVLARP (239 aa). S-methyl-5'-thioadenosine is bound at residue Gln-263. The spermidine site is built by His-298 and Asp-320. Residues Glu-340 and 374–375 contribute to the S-methyl-5'-thioadenosine site; that span reads DA. Residue Asp-392 is the Proton acceptor of the active site.

It belongs to the spermidine/spermine synthase family. Homodimer or homotetramer.

The protein localises to the cell membrane. The catalysed reaction is S-adenosyl 3-(methylsulfanyl)propylamine + putrescine = S-methyl-5'-thioadenosine + spermidine + H(+). The protein operates within amine and polyamine biosynthesis; spermidine biosynthesis; spermidine from putrescine: step 1/1. Catalyzes the irreversible transfer of a propylamine group from the amino donor S-adenosylmethioninamine (decarboxy-AdoMet) to putrescine (1,4-diaminobutane) to yield spermidine. In Streptomyces coelicolor (strain ATCC BAA-471 / A3(2) / M145), this protein is Polyamine aminopropyltransferase 1.